A 341-amino-acid chain; its full sequence is GTPase Obg (341 aa).

Positions 1–159 constitute an Obg domain; that stretch reads MKFLDQAKIY…RTIWLRLKLI (159 aa). The 168-residue stretch at 160–327 folds into the OBG-type G domain; the sequence is ADAGLVGLPN…TLRQLARIID (168 aa). GTP-binding positions include 166 to 173, 191 to 195, 212 to 215, 279 to 282, and 308 to 310; these read GLPNAGKS, FTTLH, DIPG, SQVD, and SAV. Positions 173 and 193 each coordinate Mg(2+).

This sequence belongs to the TRAFAC class OBG-HflX-like GTPase superfamily. OBG GTPase family. Monomer. It depends on Mg(2+) as a cofactor.

It localises to the cytoplasm. An essential GTPase which binds GTP, GDP and possibly (p)ppGpp with moderate affinity, with high nucleotide exchange rates and a fairly low GTP hydrolysis rate. Plays a role in control of the cell cycle, stress response, ribosome biogenesis and in those bacteria that undergo differentiation, in morphogenesis control. The protein is GTPase Obg of Brucella abortus biovar 1 (strain 9-941).